The primary structure comprises 198 residues: LIM domain-containing protein D (198 aa).

The 61-residue stretch at 5 to 65 (GKCTRCQKTV…ANHYPVGGLS (61 aa)) folds into the LIM zinc-binding domain.

The protein localises to the cell projection. Its subcellular location is the pseudopodium. It is found in the cytoplasm. The protein resides in the cell cortex. It localises to the cytoskeleton. In terms of biological role, binds to F-actin and may modulate the chemotactic response during early development and contribute to the maintenance of the strength of the actin cytoskeleton. This is LIM domain-containing protein D (limD) from Dictyostelium discoideum (Social amoeba).